The chain runs to 737 residues: Phosphoribosylformylglycinamidine synthase subunit PurL (737 aa).

H48 is an active-site residue. ATP contacts are provided by Y51 and K90. E92 lines the Mg(2+) pocket. Residues 93-96 (SHNH) and R115 each bind substrate. H94 functions as the Proton acceptor in the catalytic mechanism. A Mg(2+)-binding site is contributed by D116. Substrate is bound at residue Q244. D272 provides a ligand contact to Mg(2+). 316–318 (ESQ) is a substrate binding site. Positions 500 and 537 each coordinate ATP. Residue N538 participates in Mg(2+) binding. Position 540 (S540) interacts with substrate.

Belongs to the FGAMS family. Monomer. Part of the FGAM synthase complex composed of 1 PurL, 1 PurQ and 2 PurS subunits.

Its subcellular location is the cytoplasm. The catalysed reaction is N(2)-formyl-N(1)-(5-phospho-beta-D-ribosyl)glycinamide + L-glutamine + ATP + H2O = 2-formamido-N(1)-(5-O-phospho-beta-D-ribosyl)acetamidine + L-glutamate + ADP + phosphate + H(+). The protein operates within purine metabolism; IMP biosynthesis via de novo pathway; 5-amino-1-(5-phospho-D-ribosyl)imidazole from N(2)-formyl-N(1)-(5-phospho-D-ribosyl)glycinamide: step 1/2. Its function is as follows. Part of the phosphoribosylformylglycinamidine synthase complex involved in the purines biosynthetic pathway. Catalyzes the ATP-dependent conversion of formylglycinamide ribonucleotide (FGAR) and glutamine to yield formylglycinamidine ribonucleotide (FGAM) and glutamate. The FGAM synthase complex is composed of three subunits. PurQ produces an ammonia molecule by converting glutamine to glutamate. PurL transfers the ammonia molecule to FGAR to form FGAM in an ATP-dependent manner. PurS interacts with PurQ and PurL and is thought to assist in the transfer of the ammonia molecule from PurQ to PurL. The sequence is that of Phosphoribosylformylglycinamidine synthase subunit PurL from Sulfurimonas denitrificans (strain ATCC 33889 / DSM 1251) (Thiomicrospira denitrificans (strain ATCC 33889 / DSM 1251)).